Consider the following 222-residue polypeptide: CCA-adding enzyme (222 aa).

The ATP site is built by Ser50 and Lys53. Ser50 and Lys53 together coordinate CTP. Mg(2+)-binding residues include Asp61, Asp63, and Asp112. ATP-binding residues include His135, Lys155, and Tyr164. Positions 135, 155, and 164 each coordinate CTP.

This sequence belongs to the tRNA nucleotidyltransferase/poly(A) polymerase family. Archaeal CCA-adding enzyme subfamily. As to quaternary structure, homodimer. Mg(2+) is required as a cofactor.

It catalyses the reaction a tRNA precursor + 2 CTP + ATP = a tRNA with a 3' CCA end + 3 diphosphate. It carries out the reaction a tRNA with a 3' CCA end + 2 CTP + ATP = a tRNA with a 3' CCACCA end + 3 diphosphate. In terms of biological role, catalyzes the addition and repair of the essential 3'-terminal CCA sequence in tRNAs without using a nucleic acid template. Adds these three nucleotides in the order of C, C, and A to the tRNA nucleotide-73, using CTP and ATP as substrates and producing inorganic pyrophosphate. tRNA 3'-terminal CCA addition is required both for tRNA processing and repair. Also involved in tRNA surveillance by mediating tandem CCA addition to generate a CCACCA at the 3' terminus of unstable tRNAs. While stable tRNAs receive only 3'-terminal CCA, unstable tRNAs are marked with CCACCA and rapidly degraded. This Thermoplasma acidophilum protein is CCA-adding enzyme.